Consider the following 312-residue polypeptide: Olfactory receptor 1D2 (312 aa).

Residues 1–25 (MDGGNQSEGSEFLLLGMSESPEQQQ) lie on the Extracellular side of the membrane. An N-linked (GlcNAc...) asparagine glycan is attached at N5. The helical transmembrane segment at 26 to 49 (ILFWMFLSMYLVTVVGNVLIILAI) threads the bilayer. Residues 50–57 (NSDSHLHT) lie on the Cytoplasmic side of the membrane. A helical membrane pass occupies residues 58–79 (PMYFFLANLSFTDLFFVTNTIP). Residues 80–100 (KMLVNLQSQNKAISYAGCLTQ) are Extracellular-facing. C97 and C189 are disulfide-bonded. The chain crosses the membrane as a helical span at residues 101–120 (LYFLVSLVALDNLILAVMAY). At 121-139 (DRYVAICCPLHYTTAMSPK) the chain is on the cytoplasmic side. The chain crosses the membrane as a helical span at residues 140 to 158 (LCILLLSLCWVLSVLYGLI). The Extracellular portion of the chain corresponds to 159-196 (HTILMTRVTFCGSRKIHYIFCEMYVLLRMACSNIQINH). The N-linked (GlcNAc...) asparagine glycan is linked to N195. The chain crosses the membrane as a helical span at residues 197-219 (TVLIATGCFIFLIPFGFVIISYV). The Cytoplasmic portion of the chain corresponds to 220 to 236 (LIIRAILRIPSVSKKYK). Residues 237–259 (AFSTCASHLGAVSLFYGTLCMVY) traverse the membrane as a helical segment. Residues 260–271 (LKPLHTFSVKDS) lie on the Extracellular side of the membrane. A helical membrane pass occupies residues 272–291 (VATVMYAVVTPMMNPFIYSL). Topologically, residues 292 to 312 (RNKDMHGALGRLLDTHFKRLT) are cytoplasmic.

This sequence belongs to the G-protein coupled receptor 1 family.

The protein resides in the cell membrane. Its function is as follows. Odorant receptor. The sequence is that of Olfactory receptor 1D2 (OR1D2) from Gorilla gorilla gorilla (Western lowland gorilla).